A 278-amino-acid polypeptide reads, in one-letter code: Bis(5'-nucleosyl)-tetraphosphatase, symmetrical (278 aa).

This sequence belongs to the Ap4A hydrolase family.

The enzyme catalyses P(1),P(4)-bis(5'-adenosyl) tetraphosphate + H2O = 2 ADP + 2 H(+). Functionally, hydrolyzes diadenosine 5',5'''-P1,P4-tetraphosphate to yield ADP. This chain is Bis(5'-nucleosyl)-tetraphosphatase, symmetrical, found in Nitrosococcus oceani (strain ATCC 19707 / BCRC 17464 / JCM 30415 / NCIMB 11848 / C-107).